We begin with the raw amino-acid sequence, 239 residues long: Pimeloyl-[acyl-carrier protein] methyl ester esterase (239 aa).

Substrate contacts are provided by residues W20, 77 to 78, and 138 to 142; these read SM and FISLQ. S77 functions as the Nucleophile in the catalytic mechanism. Active-site residues include D192 and H220. H220 contacts substrate.

Belongs to the AB hydrolase superfamily. Carboxylesterase BioH family. In terms of assembly, monomer.

Its subcellular location is the cytoplasm. It catalyses the reaction 6-carboxyhexanoyl-[ACP] methyl ester + H2O = 6-carboxyhexanoyl-[ACP] + methanol + H(+). The protein operates within cofactor biosynthesis; biotin biosynthesis. The physiological role of BioH is to remove the methyl group introduced by BioC when the pimeloyl moiety is complete. It allows to synthesize pimeloyl-ACP via the fatty acid synthetic pathway through the hydrolysis of the ester bonds of pimeloyl-ACP esters. In Legionella pneumophila (strain Lens), this protein is Pimeloyl-[acyl-carrier protein] methyl ester esterase.